We begin with the raw amino-acid sequence, 626 residues long: MGLLQGLLRVRKLLLVVCVPLLLLPLPVLHPSSEASCAYVLIVTAVYWVSEAVPLGAAALVPAFLYPFFGVLRSNEVAAEYFKNTTLLLVGVICVAAAVEKWNLHKRIALRMVLMAGAKPGMLLLCFMCCTTLLSMWLSNTSTTAMVMPIVEAVLQELVSAEDEQLVAGNSNTEEAEPISLDVKNSQPSLELIFVNEESNADLTTLMHNENLNGVPSITNPIKTANQHQGKKQHPSQEKPQVLTPSPRKQKLNRKYRSHHDQMICKCLSLSISYSATIGGLTTIIGTSTSLIFLEHFNNQYPAAEVVNFGTWFLFSFPISLIMLVVSWFWMHWLFLGCNFKETCSLSKKKKTKREQLSEKRIQEEYEKLGDISYPEMVTGFFFILMTVLWFTREPGFVPGWDSFFEKKGYRTDATVSVFLGFLLFLIPAKKPCFGKKNDGENQEHSLGTEPIITWKDFQKTMPWEIVILVGGGYALASGSKSSGLSTWIGNQMLSLSSLPPWAVTLLACILVSIVTEFVSNPATITIFLPILCSLSETLHINPLYTLIPVTMCISFAVMLPVGNPPNAIVFSYGHCQIKDMVKAGLGVNVIGLVIVMVAINTWGVSLFHLDTYPAWARVSNITDQA.

A run of 4 helical transmembrane segments spans residues 13–33 (LLLV…HPSS), 52–72 (AVPL…FGVL), 77–97 (VAAE…CVAA), and 113–133 (VLMA…CTTL). Over residues 217 to 228 (SITNPIKTANQH) the composition is skewed to polar residues. Positions 217 to 252 (SITNPIKTANQHQGKKQHPSQEKPQVLTPSPRKQKL) are disordered. 8 helical membrane-spanning segments follow: residues 274 to 294 (YSAT…LIFL), 309 to 329 (FGTW…VSWF), 372 to 392 (ISYP…LWFT), 414 to 434 (ATVS…KPCF), 466 to 486 (IVIL…SGLS), 499 to 519 (LPPW…TEFV), 543 to 563 (PLYT…LPVG), and 590 to 610 (VIGL…LFHL).

This sequence belongs to the SLC13A/DASS transporter (TC 2.A.47) family. NADC subfamily. In terms of tissue distribution, highly expressed in placenta and testis with intermediate levels in brain and lower levels in heart, thymus and liver.

It localises to the membrane. It carries out the reaction sulfate(out) + 3 Na(+)(out) = sulfate(in) + 3 Na(+)(in). With respect to regulation, transport is inhibited by thiosulfate, phosphate, molybdate, selenate and tungstate. Not inhibited by oxalate, citrate, succinate, phenol red or 4,4'-diisothiocyanostilbene-2,2'-disulfonic acid (DIDS). Its function is as follows. Sodium:sulfate symporter that mediates sulfate reabsorption in the high endothelial venules (HEV). The polypeptide is Solute carrier family 13 member 4 (SLC13A4) (Homo sapiens (Human)).